The chain runs to 363 residues: Galanin receptor 2a (363 aa).

Residues 1–23 (MNASQQIHVFSSHWKVESVIISL) are Extracellular-facing. The helical transmembrane segment at 24-44 (IFSMIFLVGTVGNCLVLAVLI) threads the bilayer. The Cytoplasmic segment spans residues 45-54 (RNGQMNTKST). The chain crosses the membrane as a helical span at residues 55–75 (NLFILNLGLADLCFIVFCVPL). The Extracellular portion of the chain corresponds to 76-94 (QATIYTMDEWVFGAFVCKA). C92 and C169 form a disulfide bridge. The chain crosses the membrane as a helical span at residues 95 to 115 (VHFIIYLTMYASIFTLAAVSL). At 116–135 (DRYLAIRYPLRSRETRTPRN) the chain is on the cytoplasmic side. A helical membrane pass occupies residues 136–156 (ALTSISLVWALSLFFSSPYLS). Residues 157-179 (YYQQMDLDGTTVCIPAWSVHHRQ) lie on the Extracellular side of the membrane. A helical membrane pass occupies residues 180–200 (AMDICTFIFGYLIPVLILGIT). Over 201–230 (YARTIRYLWTSVDPMQDMSESRKAKRKVTK) the chain is Cytoplasmic. Residues 231-251 (MIIIVAVLFCLCWLPHHLVIL) form a helical membrane-spanning segment. Residues 252-268 (CMWFGHFPLNHTTYVLR) are Extracellular-facing. Residues 269-289 (ILSHLVAYANSCLNPIVYALV) form a helical membrane-spanning segment. Topologically, residues 290 to 363 (SKHFRKGFKK…TSAFMTFNVT (74 aa)) are cytoplasmic.

Belongs to the G-protein coupled receptor 1 family. In terms of tissue distribution, expressed in neurons in the ventral area of the interpeduncular nucleus (IPN) where expression often overlaps with spx1.

It localises to the membrane. Functionally, receptor for the hormone galanin. Receptor for the hormones spexin-1 and spexin-2. In Danio rerio (Zebrafish), this protein is Galanin receptor 2a.